The sequence spans 223 residues: tRNA (guanine-N(7)-)-methyltransferase (223 aa).

S-adenosyl-L-methionine contacts are provided by D56, D81, D108, and D130. D130 is a catalytic residue. K134 and D166 together coordinate substrate.

The protein belongs to the class I-like SAM-binding methyltransferase superfamily. TrmB family.

It carries out the reaction guanosine(46) in tRNA + S-adenosyl-L-methionine = N(7)-methylguanosine(46) in tRNA + S-adenosyl-L-homocysteine. Its pathway is tRNA modification; N(7)-methylguanine-tRNA biosynthesis. In terms of biological role, catalyzes the formation of N(7)-methylguanine at position 46 (m7G46) in tRNA. The polypeptide is tRNA (guanine-N(7)-)-methyltransferase (Rubrobacter xylanophilus (strain DSM 9941 / JCM 11954 / NBRC 16129 / PRD-1)).